The chain runs to 139 residues: Small ribosomal subunit protein bS6 (139 aa).

A disordered region spans residues 120-139 (KGASKVETPTGPESTDIQEK). Residues 130–139 (GPESTDIQEK) are compositionally biased toward polar residues.

This sequence belongs to the bacterial ribosomal protein bS6 family.

Binds together with bS18 to 16S ribosomal RNA. This chain is Small ribosomal subunit protein bS6 (rpsF), found in Borreliella burgdorferi (strain ATCC 35210 / DSM 4680 / CIP 102532 / B31) (Borrelia burgdorferi).